The following is a 305-amino-acid chain: Phosphatidylglycerol--prolipoprotein diacylglyceryl transferase (305 aa).

Transmembrane regions (helical) follow at residues 10 to 30 (FLIS…GAII), 59 to 79 (LMLG…AFEW), and 92 to 112 (LTTG…STVI). Arginine 140 contributes to the a 1,2-diacyl-sn-glycero-3-phospho-(1'-sn-glycerol) binding site. The next 2 membrane-spanning stretches (helical) occupy residues 182–202 (LFHP…GILL) and 260–280 (IRVA…LIFL).

It belongs to the Lgt family.

It is found in the cell membrane. The catalysed reaction is L-cysteinyl-[prolipoprotein] + a 1,2-diacyl-sn-glycero-3-phospho-(1'-sn-glycerol) = an S-1,2-diacyl-sn-glyceryl-L-cysteinyl-[prolipoprotein] + sn-glycerol 1-phosphate + H(+). Its pathway is protein modification; lipoprotein biosynthesis (diacylglyceryl transfer). Functionally, catalyzes the transfer of the diacylglyceryl group from phosphatidylglycerol to the sulfhydryl group of the N-terminal cysteine of a prolipoprotein, the first step in the formation of mature lipoproteins. In Chloroflexus aggregans (strain MD-66 / DSM 9485), this protein is Phosphatidylglycerol--prolipoprotein diacylglyceryl transferase.